The following is a 612-amino-acid chain: MDVGSCSVGNNPLAQLHKHTQQNKSLQFNQKNNGRLNESPLQGTNKPGISEAFISNVNAISQENMANMQRFINGEPLIDDKRRMEIGPSSGRLPPFSNVHSLQTSANPTQIKGVNDISHWSQEFQGSNSIQNRNADTGNSEKAWQRGSTTASSRFQYPNTMMNNYAYASMNSLSGSRLQSPAFMNQQQSGRSKEGVNEQEQQPWTDQFEKLEKEVSENLDINDEIEKEENVSEVEQNKPETVEKEEGVYGDQYQSDFQEVWDSIHKDAEEVLPSELVNDDLNLGEDYLKYLGGRVNGNIEYAFQSNNEYFNNPNAYKIGCLLMENGAKLSEAALAFEAAVKEKPDHVDAWLRLGLVQTQNEKELNGISALEECLKLDPKNLEAMKTLAISYINEGYDMSAFTMLDKWAETKYPEIWSRIKQQDDKFQKEKGFTHIDMNAHITKQFLQLANNLSTIDPEIQLCLGLLFYTKDDFDKTIDCFESALRVNPNDELMWNRLGASLANSNRSEEAIQAYHRALQLKPSFVRARYNLAVSSMNIGCFKEAAGYLLSVLSMHEVNTNNKKGDVGSLLNTYNDTVIETLKRVFIAMNRDDLLQEVKPGMDLKRFKGEFSF.

Position 1 is an N-acetylmethionine (Met-1). The disordered stretch occupies residues 1 to 24 (MDVGSCSVGNNPLAQLHKHTQQNK). Residue Cys-6 forms a Glycyl cysteine thioester (Cys-Gly) (interchain with G-Cter in ubiquitin) linkage. The amphipathic helix 1 (AH1) stretch occupies residues 7–29 (SVGNNPLAQLHKHTQQNKSLQFN). Residues Lys-18 and Lys-24 each participate in a glycyl lysine isopeptide (Lys-Gly) (interchain with G-Cter in ubiquitin) cross-link. At Ser-61 the chain carries Phosphoserine. One copy of the TPR 1 repeat lies at 64–97 (NMANMQRFINGEPLIDDKRRMEIGPSSGRLPPFS). The amphipathic helix 2 (AH2) stretch occupies residues 70 to 104 (RFINGEPLIDDKRRMEIGPSSGRLPPFSNVHSLQT). The WxxxF/Y motif 1 motif lies at 120–124 (WSQEF). A disordered region spans residues 129-151 (SIQNRNADTGNSEKAWQRGSTTA). Residues 158–174 (PNTMMNNYAYASMNSLS) are amphipathic helix 3 (AH3). Residues 182-202 (AFMNQQQSGRSKEGVNEQEQQ) form a disordered region. The WxxxF/Y motif 2 motif lies at 204–208 (WTDQF). The tract at residues 257-273 (FQEVWDSIHKDAEEVLP) is amphipathic helix 4 (AH4). TPR repeat units follow at residues 313-346 (PNAYKIGCLLMENGAKLSEAALAFEAAVKEKPDH), 347-380 (VDAWLRLGLVQTQNEKELNGISALEECLKLDPKN), 381-418 (LEAMKTLAISYINEGYDMSAFTMLDKWAETKYPEIWSR), 419-456 (IKQQDDKFQKEKGFTHIDMNAHITKQFLQLANNLSTID), 457-490 (PEIQLCLGLLFYTKDDFDKTIDCFESALRVNPND), 491-524 (ELMWNRLGASLANSNRSEEAIQAYHRALQLKPSF), and 525-558 (VRARYNLAVSSMNIGCFKEAAGYLLSVLSMHEVN).

This sequence belongs to the peroxisomal targeting signal receptor family. Interacts (via WxxxF/Y and LVxEF motifs) with PEX14; promoting translocation through the PEX13-PEX14 docking complex. Post-translationally, monoubiquitinated at Cys-6 by PEX2 during PEX5 passage through the retrotranslocation channel: monoubiquitination acts as a signal for PEX5 extraction and is required for proper export from peroxisomes and recycling. Ubiquitination at Cys-6 is UBC4-independent but requires the presence of PEX4. When PEX5 recycling is compromised, polyubiquitinated at Lys-18 and Lys-24 by PEX10 during its passage through the retrotranslocation channel, leading to its degradation. Ubiquitination at Lys-18 and Lys-24 are UBC4-dependent. Monoubiquitination at Cys-6 and polyubiquitination at Lys-18 and Lys-24 are removed by UBP15 in the cytosol, resetting PEX5 for a subsequent import cycle.

It is found in the cytoplasm. The protein resides in the cytosol. It localises to the peroxisome matrix. Receptor that mediates peroxisomal import of proteins containing a C-terminal PTS1-type tripeptide peroxisomal targeting signal (SKL-type). Binds to cargo proteins containing a PTS1 peroxisomal targeting signal in the cytosol, and translocates them into the peroxisome matrix by passing through the PEX13-PEX14 docking complex along with cargo proteins. PEX5 receptor is then retrotranslocated into the cytosol, leading to release of bound cargo in the peroxisome matrix, and reset for a subsequent peroxisome import cycle. This chain is Peroxisomal targeting signal receptor, found in Saccharomyces cerevisiae (strain ATCC 204508 / S288c) (Baker's yeast).